Consider the following 243-residue polypeptide: MTNSSLRPSGRRADQLRDVRITRHYTKHAEGAVLVEFGDTKVICTASVAERVPEFLRERGQGWLTAEYGMLPRATHTRSDREAARGKQTGRTQEIQRLIGRALRAVFDLNALGPRTLHLDCDVIQADGGTRTASITGAFVAAHDAVTKLVAAGRIARSPITDYVAAISVGMFGGTPVLDLDYDEDSACDTDMNVVMTGAGGFVEVQGTAEGAPFSRTEMNALLDLAQAGIGELVRLQRAALEA.

Phosphate-binding positions include Arg91 and 129–131 (GTR).

This sequence belongs to the RNase PH family. As to quaternary structure, homohexameric ring arranged as a trimer of dimers.

It carries out the reaction tRNA(n+1) + phosphate = tRNA(n) + a ribonucleoside 5'-diphosphate. In terms of biological role, phosphorolytic 3'-5' exoribonuclease that plays an important role in tRNA 3'-end maturation. Removes nucleotide residues following the 3'-CCA terminus of tRNAs; can also add nucleotides to the ends of RNA molecules by using nucleoside diphosphates as substrates, but this may not be physiologically important. Probably plays a role in initiation of 16S rRNA degradation (leading to ribosome degradation) during starvation. The polypeptide is Ribonuclease PH (Burkholderia pseudomallei (strain 668)).